A 633-amino-acid polypeptide reads, in one-letter code: Early transcription factor 70 kDa subunit (633 aa).

A Helicase ATP-binding domain is found at 32-185; it reads RTILDHNESV…SNIISIMSDE (154 aa). Position 45-52 (45-52) interacts with ATP; that stretch reads HIMGSGKT. Residues 135–138 carry the DEXH box motif; that stretch reads DEAH. Residues 326 to 505 form the Helicase C-terminal domain; sequence KFKYFIDTIG…TLPFDIKKLL (180 aa).

This sequence belongs to the helicase family. VETF subfamily. As to quaternary structure, heterodimer of a 70 kDa and a 82 kDa subunit. Part of the early transcription complex composed of ETF, RAP94, and the DNA-directed RNA polymerase.

It is found in the virion. Acts with RNA polymerase to initiate transcription from early gene promoters. Is recruited by the RPO-associated protein of 94 kDa (RAP94) to form the early transcription complex, which also contains the core RNA polymerase. ETF heterodimer binds to early gene promoters. In Vertebrata (FPV), this protein is Early transcription factor 70 kDa subunit (VETFS).